We begin with the raw amino-acid sequence, 348 residues long: tRNA pseudouridine synthase D (348 aa).

Position 27 (Phe-27) interacts with substrate. Asp-80 serves as the catalytic Nucleophile. Asn-129 contacts substrate. One can recognise a TRUD domain in the interval 155–303 (GVPNYFGSQR…VESARRAVLL (149 aa)). Residue Phe-329 participates in substrate binding.

Belongs to the pseudouridine synthase TruD family.

The catalysed reaction is uridine(13) in tRNA = pseudouridine(13) in tRNA. Functionally, responsible for synthesis of pseudouridine from uracil-13 in transfer RNAs. The sequence is that of tRNA pseudouridine synthase D from Pectobacterium carotovorum subsp. carotovorum (strain PC1).